The chain runs to 114 residues: Probable 4-amino-4-deoxy-L-arabinose-phosphoundecaprenol flippase subunit ArnE (114 aa).

3 helical membrane passes run 38–58 (LTLRWLAIAVVSLGLGMLLWL), 64–84 (LPLSVAYPMLSFNFVLVTLAA), and 94–114 (LRHWLGVAAIIFGILLMSWHL). Residues 43–112 (LAIAVVSLGL…IIFGILLMSW (70 aa)) form the EamA domain.

This sequence belongs to the ArnE family. In terms of assembly, heterodimer of ArnE and ArnF.

The protein localises to the cell inner membrane. It participates in bacterial outer membrane biogenesis; lipopolysaccharide biosynthesis. Its function is as follows. Translocates 4-amino-4-deoxy-L-arabinose-phosphoundecaprenol (alpha-L-Ara4N-phosphoundecaprenol) from the cytoplasmic to the periplasmic side of the inner membrane. The chain is Probable 4-amino-4-deoxy-L-arabinose-phosphoundecaprenol flippase subunit ArnE from Yersinia pseudotuberculosis serotype O:1b (strain IP 31758).